Consider the following 224-residue polypeptide: Heme response regulator HssR (224 aa).

One can recognise a Response regulatory domain in the interval 3-116; the sequence is NCLIVDDDKK…ELLFRIKAVL (114 aa). Asp-52 carries the post-translational modification 4-aspartylphosphate. Positions 124 to 222 form a DNA-binding region, ompR/PhoB-type; sequence DNELQLGNLI…VRGQGYRVDQ (99 aa).

Post-translationally, phosphorylated by HssS.

It localises to the cytoplasm. Its function is as follows. Member of the two-component regulatory system HssS/HssR involved in intracellular heme homeostasis and tempering of staphylococcal virulence. Phosphorylated HssR binds to a direct repeat sequence within hrtAB promoter and activates the expression of hrtAB, an efflux pump, in response to extracellular heme, hemin, hemoglobin or blood. This is Heme response regulator HssR (hssR) from Staphylococcus epidermidis (strain ATCC 12228 / FDA PCI 1200).